The following is a 518-amino-acid chain: Retinal dehydrogenase 2 (518 aa).

NAD(+)-binding positions include 184-186 (IPW), 210-213 (KPAE), and 264-266 (STE). Catalysis depends on Glu-286, which acts as the Proton acceptor. The active-site Nucleophile is Cys-320. NAD(+)-binding positions include 366–370 (KQYNK) and Glu-417.

The protein belongs to the aldehyde dehydrogenase family. In terms of assembly, homotetramer.

The protein resides in the cytoplasm. It catalyses the reaction retinal + NAD(+) + H2O = retinoate + NADH + 2 H(+). The catalysed reaction is all-trans-retinal + NAD(+) + H2O = all-trans-retinoate + NADH + 2 H(+). The enzyme catalyses all-trans-13,14-dihydroretinal + NAD(+) + H2O = all-trans-13,14-dihydroretinoate + NADH + 2 H(+). It participates in cofactor metabolism; retinol metabolism. In terms of biological role, catalyzes the NAD-dependent oxidation of aldehyde substrates, such as all-trans-retinal and all-trans-13,14-dihydroretinal, to their corresponding carboxylic acids, all-trans-retinoate and all-trans-13,14-dihydroretinoate, respectively. Retinoate signaling is critical for the transcriptional control of many genes, for instance it is crucial for initiation of meiosis in both male and female. Recognizes retinal as substrate, both in its free form and when bound to cellular retinol-binding protein. Lacks activity with benzaldehyde, acetaldehyde and octanal. Displays complete lack of activity with citral. In Gallus gallus (Chicken), this protein is Retinal dehydrogenase 2 (ALDH1A2).